A 457-amino-acid chain; its full sequence is RuvB-like helicase 1 (457 aa).

ATP is bound at residue 73 to 80 (GGPSTGKT).

Belongs to the RuvB family. May form heterododecamers with RVB2. Component of the SWR1 chromatin remodeling complex, the INO80 chromatin remodeling complex, and of the R2TP complex.

It is found in the nucleus. The enzyme catalyses ATP + H2O = ADP + phosphate + H(+). Its function is as follows. DNA helicase which participates in several chromatin remodeling complexes, including the SWR1 and the INO80 complexes. The SWR1 complex mediates the ATP-dependent exchange of histone H2A for the H2A variant HZT1 leading to transcriptional regulation of selected genes by chromatin remodeling. The INO80 complex remodels chromatin by shifting nucleosomes and is involved in DNA repair. Also involved in pre-rRNA processing. The sequence is that of RuvB-like helicase 1 (RVB1) from Kluyveromyces lactis (strain ATCC 8585 / CBS 2359 / DSM 70799 / NBRC 1267 / NRRL Y-1140 / WM37) (Yeast).